The chain runs to 302 residues: Sulfate adenylyltransferase subunit 2 (302 aa).

Belongs to the PAPS reductase family. CysD subfamily. Heterodimer composed of CysD, the smaller subunit, and CysN.

It carries out the reaction sulfate + ATP + H(+) = adenosine 5'-phosphosulfate + diphosphate. It participates in sulfur metabolism; hydrogen sulfide biosynthesis; sulfite from sulfate: step 1/3. Functionally, with CysN forms the ATP sulfurylase (ATPS) that catalyzes the adenylation of sulfate producing adenosine 5'-phosphosulfate (APS) and diphosphate, the first enzymatic step in sulfur assimilation pathway. APS synthesis involves the formation of a high-energy phosphoric-sulfuric acid anhydride bond driven by GTP hydrolysis by CysN coupled to ATP hydrolysis by CysD. This Salmonella schwarzengrund (strain CVM19633) protein is Sulfate adenylyltransferase subunit 2.